The primary structure comprises 145 residues: Holo-[acyl-carrier-protein] synthase (145 aa).

The Mg(2+) site is built by Asp9 and Glu63.

Belongs to the P-Pant transferase superfamily. AcpS family. The cofactor is Mg(2+).

It is found in the cytoplasm. It carries out the reaction apo-[ACP] + CoA = holo-[ACP] + adenosine 3',5'-bisphosphate + H(+). Its function is as follows. Transfers the 4'-phosphopantetheine moiety from coenzyme A to a Ser of acyl-carrier-protein. This chain is Holo-[acyl-carrier-protein] synthase, found in Burkholderia vietnamiensis (strain G4 / LMG 22486) (Burkholderia cepacia (strain R1808)).